We begin with the raw amino-acid sequence, 1095 residues long: Actin cross-linking toxin VgrG1 (1095 aa).

The ACD domain occupies 712–1095; the sequence is TPDFPTHFPK…TVIQQVESLV (384 aa). 723 to 727 is a binding site for ATP; it reads SIGIE. 2 residues coordinate Mg(2+): Glu727 and Glu789. Ser792 is an ATP binding site. Mg(2+) is bound at residue Gln873. Arg979 is a binding site for ATP. Mg(2+) is bound at residue Glu1050.

It belongs to the VgrG protein family. Interacts with protein VC1417. It depends on Mg(2+) as a cofactor.

The protein localises to the secreted. Its subcellular location is the host cytoplasm. The protein resides in the host cytosol. Its function is as follows. Part of the type VI secretion system (T6SS) specialized secretion system, which delivers several virulence factors in both prokaryotic and eukaryotic cells during infection. Forms the spike at the tip of the elongating tube probably formed by hemolysin co-regulated protein/Hcp. Allows the delivery of the TseL antibacterial toxin to target cells where it exerts its toxicity. Also acts directly as an actin-directed toxin that catalyzes the covalent cross-linking of host cytoplasmic monomeric actin. Mediates the cross-link between 'Lys-50' of one monomer and 'Glu-270' of another actin monomer, resulting in formation of highly toxic actin oligomers that cause cell rounding. The toxin can be highly efficient at very low concentrations by acting on formin homology family proteins: toxic actin oligomers bind with high affinity to formins and adversely affect both nucleation and elongation abilities of formins, causing their potent inhibition in both profilin-dependent and independent manners. Acts as an acid--amino-acid ligase that transfers the gamma-phosphoryl group of ATP to the 'Glu-270' actin residue, resulting in the formation of an activated acyl phosphate intermediate. This intermediate is further hydrolyzed and the energy of hydrolysis is utilized for the formation of the amide bond between actin subunits. This Vibrio cholerae serotype O1 (strain ATCC 39541 / Classical Ogawa 395 / O395) protein is Actin cross-linking toxin VgrG1.